Consider the following 395-residue polypeptide: Phosphoglycerate kinase (395 aa).

Substrate is bound by residues D21–N23, R36, H59–R62, R113, and R146. ATP is bound by residues K197, E324, and G350–T353.

This sequence belongs to the phosphoglycerate kinase family. In terms of assembly, monomer.

Its subcellular location is the cytoplasm. The catalysed reaction is (2R)-3-phosphoglycerate + ATP = (2R)-3-phospho-glyceroyl phosphate + ADP. Its pathway is carbohydrate degradation; glycolysis; pyruvate from D-glyceraldehyde 3-phosphate: step 2/5. This chain is Phosphoglycerate kinase, found in Acinetobacter baylyi (strain ATCC 33305 / BD413 / ADP1).